The sequence spans 419 residues: Aminoacyltransferase FemB (419 aa).

Belongs to the FemABX family. In terms of assembly, homodimer. Interacts with FemA.

The protein localises to the cytoplasm. The catalysed reaction is MurNAc-L-Ala-D-isoglutaminyl-L-Lys-(N(6)-tri-Gly)-D-Ala-D-Ala-diphospho-di-trans,octa-cis-undecaprenyl-GlcNAc + 2 glycyl-tRNA(Gly) = MurNAc-L-Ala-D-isoglutaminyl-L-Lys-(N(6)-penta-Gly)-D-Ala-D-Ala-diphospho-di-trans,octa-cis-undecaprenyl-GlcNAc + 2 tRNA(Gly) + 2 H(+). Its function is as follows. Catalyzes the formation of the pentaglycine interpeptide bridge, which is characteristic of the S.aureus peptidoglycan. Adds glycines 4 and 5 of the pentaglycine bridge, using glycyl-tRNA(Gly) as donor. In Staphylococcus aureus (strain bovine RF122 / ET3-1), this protein is Aminoacyltransferase FemB (femB).